The primary structure comprises 349 residues: Cobalt-precorrin-5B C(1)-methyltransferase (349 aa).

It belongs to the CbiD family.

The enzyme catalyses Co-precorrin-5B + S-adenosyl-L-methionine = Co-precorrin-6A + S-adenosyl-L-homocysteine. It functions in the pathway cofactor biosynthesis; adenosylcobalamin biosynthesis; cob(II)yrinate a,c-diamide from sirohydrochlorin (anaerobic route): step 6/10. Its function is as follows. Catalyzes the methylation of C-1 in cobalt-precorrin-5B to form cobalt-precorrin-6A. This Saccharolobus islandicus (strain L.S.2.15 / Lassen #1) (Sulfolobus islandicus) protein is Cobalt-precorrin-5B C(1)-methyltransferase.